A 437-amino-acid chain; its full sequence is Trigger factor (437 aa).

The PPIase FKBP-type domain maps to 163–248 (SDRVIIDFEG…LNNVSEATLP (86 aa)).

The protein belongs to the FKBP-type PPIase family. Tig subfamily.

Its subcellular location is the cytoplasm. It carries out the reaction [protein]-peptidylproline (omega=180) = [protein]-peptidylproline (omega=0). Involved in protein export. Acts as a chaperone by maintaining the newly synthesized protein in an open conformation. Functions as a peptidyl-prolyl cis-trans isomerase. The sequence is that of Trigger factor from Neisseria meningitidis serogroup C / serotype 2a (strain ATCC 700532 / DSM 15464 / FAM18).